A 262-amino-acid polypeptide reads, in one-letter code: 3-methyl-2-oxobutanoate hydroxymethyltransferase (262 aa).

The Mg(2+) site is built by Asp-44 and Asp-83. Residues 44–45, Asp-83, and Lys-113 contribute to the 3-methyl-2-oxobutanoate site; that span reads DS. A Mg(2+)-binding site is contributed by Glu-115. The active-site Proton acceptor is the Glu-182.

Belongs to the PanB family. In terms of assembly, homodecamer; pentamer of dimers. Requires Mg(2+) as cofactor.

The protein localises to the cytoplasm. It catalyses the reaction 3-methyl-2-oxobutanoate + (6R)-5,10-methylene-5,6,7,8-tetrahydrofolate + H2O = 2-dehydropantoate + (6S)-5,6,7,8-tetrahydrofolate. Its pathway is cofactor biosynthesis; (R)-pantothenate biosynthesis; (R)-pantoate from 3-methyl-2-oxobutanoate: step 1/2. Functionally, catalyzes the reversible reaction in which hydroxymethyl group from 5,10-methylenetetrahydrofolate is transferred onto alpha-ketoisovalerate to form ketopantoate. This Picosynechococcus sp. (strain ATCC 27264 / PCC 7002 / PR-6) (Agmenellum quadruplicatum) protein is 3-methyl-2-oxobutanoate hydroxymethyltransferase.